A 303-amino-acid chain; its full sequence is NmrA-like family domain-containing oxidoreductase FVEG_08287 (303 aa).

NADP(+) contacts are provided by residues 8 to 13 (LGAGEL), 8 to 14 (LGAGELG), 36 to 39 (LRPS), R37, 56 to 57 (QG), 77 to 79 (IFR), and 159 to 162 (FMSF).

The protein belongs to the NmrA-type oxidoreductase family.

Functionally, nmrA-like family domain-containing oxidoreductase; part of the Fusarium detoxification of benzoxazolinone cluster 1 (FDB1) involved in the degradation of benzoxazolinones produced by the host plant. Maize, wheat, and rye produce the 2 benzoxazinone phytoanticipins 2,4-dihy-droxy-7-methoxy-1,4-benzoxazin-3-one (DIMBOA) and 2,4-dihydroxy-1,4-benzoxazin-3-one (DIBOA) that, due to their inherent instability once released, spontaneously degrade to the more stable corresponding benzoxazolinones, 6-methoxy-2-benzoxazolinone (MBOA) and 2-benzoxazolinone (BOA), respectively. The first step in the detoxification of benzoxazolinones involves the hydrolysis of the cyclic ester bond of benzoxazolinones by the FDB1 cluster gamma-lactamase MBL1 to aminophenols. MBL1 is able to convert BOA into 2-aminophenol (2-AP), as well as MBOA into 5-methoxy-2-aminophenol (2-AMP). The FDB2 cluster N-malonyltransferase FDB2/NAT1 then metabolizes aminophenols via N-malonylation to non-toxic malonamic acids. FDB2/NAT1 converts 2-AP into N-(2-hydroxyphenyl) malonamic acid (HPMA) and 2-AMP into N-(2-hydroxy-4-methoxyphenyl) malonamic acid (HMPMA). The duplicated dienlactone hydrolases DLH1 and DLH2 may provide redundant function for hydrolyzing the lactone moiety in the BOA molecule. The roles of the amidases an other enzymes encoded by the 2 FDB clusters have not been identified so far. In Gibberella moniliformis (strain M3125 / FGSC 7600) (Maize ear and stalk rot fungus), this protein is NmrA-like family domain-containing oxidoreductase FVEG_08287.